Consider the following 42-residue polypeptide: Photosystem I reaction center subunit IX (42 aa).

The helical transmembrane segment at 8–28 threads the bilayer; sequence YLSTAPVLFTVWLSFTASFII.

Belongs to the PsaJ family.

Its subcellular location is the plastid. The protein resides in the chloroplast thylakoid membrane. Functionally, may help in the organization of the PsaE and PsaF subunits. The polypeptide is Photosystem I reaction center subunit IX (Rhodomonas salina (Cryptomonas salina)).